The sequence spans 985 residues: Regulator of telomere elongation helicase 1 homolog (985 aa).

Residues 7 to 303 (AGIPVHFPFE…QDMGGDEPKD (297 aa)) form the Helicase ATP-binding domain. 42–49 (SPTGTGKT) contributes to the ATP binding site. Residues Cys-146, Cys-164, Cys-173, and Cys-209 each coordinate [4Fe-4S] cluster. The short motif at 252–255 (DEAH) is the DEAH box element. The disordered stretch occupies residues 858–884 (GSSGMVKIHKRERSSPTQPESSSQVSK). Residues 872-882 (SPTQPESSSQV) are compositionally biased toward polar residues. Thr-874 is modified (phosphothreonine).

The protein belongs to the helicase family. RAD3/XPD subfamily.

The protein resides in the nucleus. The catalysed reaction is ATP + H2O = ADP + phosphate + H(+). A probable ATP-dependent DNA helicase implicated in DNA repair and the maintenance of genomic stability. Acts as an anti-recombinase to counteract toxic recombination and limit crossover during meiosis. Regulates meiotic recombination and crossover homeostasis by physically dissociating strand invasion events and thereby promotes noncrossover repair by meiotic synthesis dependent strand annealing (SDSA) as well as disassembly of D loop recombination intermediates. The chain is Regulator of telomere elongation helicase 1 homolog from Drosophila yakuba (Fruit fly).